The sequence spans 652 residues: Neuroendocrine convertase 2 (652 aa).

The first 22 residues, 1-22, serve as a signal peptide directing secretion; sequence MKNTHVDLICVFLSIFIGIGEA. The propeptide occupies 23-107; sequence VDVYTNHFHV…QLKGYTRTKR (85 aa). A Peptidase S8 domain is found at 136-481; it reads QWYLKNTGQA…FGVLDAAEMV (346 aa). Asparagine 167 carries an N-linked (GlcNAc...) asparagine glycan. Active-site charge relay system residues include aspartate 174 and histidine 215. 2 disulfides stabilise this stretch: cysteine 232/cysteine 382 and cysteine 324/cysteine 354. Asparagine 290 carries an N-linked (GlcNAc...) asparagine glycan. Serine 390 (charge relay system) is an active-site residue. N-linked (GlcNAc...) asparagine glycosylation occurs at asparagine 451. The P/Homo B domain occupies 489 to 625; that stretch reads TSPPRYHCTA…ELMLHGTREA (137 aa). An intrachain disulfide couples cysteine 496 to cysteine 522. Positions 501-652 are required for ubiquitination-mediated degradation; that stretch reads IDTPHEIPAD…TVQKAHKRSH (152 aa). N-linked (GlcNAc...) asparagine glycosylation is present at asparagine 542.

Belongs to the peptidase S8 family. Furin subfamily. Interacts (via C-terminus) with F-box protein fsn-1 (via SPRY domain); the interaction results in egl-3 proteasomal degradation. Post-translationally, ubiquitinated. Expressed in head and tail ganglia. Expressed in neurons including mechanosensory and motor neurons, and interneurons (at protein level). Expressed in the nerve ring, ventral nerve cord and intestine.

It is found in the cell projection. It localises to the axon. The protein resides in the cytoplasmic vesicle. Its subcellular location is the secretory vesicle lumen. The protein localises to the secreted. It catalyses the reaction Release of protein hormones and neuropeptides from their precursors, generally by hydrolysis of -Lys-Arg-|- bonds.. Functionally, serine endoprotease which cleaves preproteins at paired basic amino acids. Processes FMRFamide-like (flp) and neuropeptide-like protein (nlp) neuropeptides. Probably by processing flp-1 and flp-18, modulates the neuronal excitation-inhibition balance and thus the level of activity of the locomotor circuit. Regulates sensitivity to mechanosensory stimuli. By processing neuropeptides, modulates basal acetylcholine release at the ventral cord neuromuscular junctions. Probably by processing flp neuropeptides, regulates the turning step of male mating behavior. Cleaves pro-insulin-like proteins ins-3, ins-4 and ins-6 into their mature active forms. Together with convertase kpc-1, cleaves pro-insulin-like protein ins-18. By controlling ins-4 and ins-6 processing and thus the activation of the daf-2/InsR pathway, negatively modulates synapse development and synaptic transmission at neuromuscular junctions. Similarly, by controlling ins-4 and ins-6 processing, negatively regulates dauer formation under optimal environmental conditions. Under adverse environmental conditions, may promote dauer formation by processing ins-18, a daf-2/InsR antagonist. May cleave dense-core vesicle membrane protein ida-1. Involved in egg-laying, fat storage and locomotion. The sequence is that of Neuroendocrine convertase 2 from Caenorhabditis elegans.